Here is a 409-residue protein sequence, read N- to C-terminus: BRCA1-A complex subunit Abraxas 1 (409 aa).

An MPN domain is found at 7 to 160; the sequence is SAVLSGFVLG…HSLYKPQKGL (154 aa). Serine 48 is modified (phosphoserine). A coiled-coil region spans residues 206–260; the sequence is DGSLKEVHKINEMYASLQEELKSICKKVEDSEQAVDKLVKDVNRLKREIEKRRGA. Over residues 362–372 the composition is skewed to basic and acidic residues; sequence LLDTQDKRSKA. The segment at 362–409 is disordered; the sequence is LLDTQDKRSKADTGSSNQDKASKMSSPETDEEIEKMKGFGEYSRSPTF. Residues 373 to 388 are compositionally biased toward polar residues; that stretch reads DTGSSNQDKASKMSSP. Residues serine 386 and serine 387 each carry the phosphoserine modification. Threonine 390 carries the post-translational modification Phosphothreonine. Phosphoserine occurs at positions 404 and 406. A pSXXF motif motif is present at residues 406 to 409; the sequence is SPTF.

It belongs to the FAM175 family. Abraxas subfamily. As to quaternary structure, component of the ARISC complex, at least composed of UIMC1/RAP80, ABRAXAS1, BRCC3/BRCC36, BABAM2 and BABAM1/NBA1. Component of the BRCA1-A complex, at least composed of BRCA1, BARD1, UIMC1/RAP80, ABRAXAS1, BRCC3/BRCC36, BABAM2 and BABAM1/NBA1. In the complex, interacts directly with UIMC1/RAP80, BRCC3/BRCC36 and BABAM2. Interacts directly (when phosphorylated at Ser-406) with BRCA1. Homodimer. The homodimer interacts directly (when phosphorylated at Ser-404 and Ser-406) with two BRCA1 chains, giving rise to a heterotetramer. Binds polyubiquitin. Phosphorylation of Ser-406 of the pSXXF motif by ATM or ATR constitutes a specific recognition motif for the BRCT domain of BRCA1. Ionizing radiation promotes rapid phosphorylation at Ser-404 and Ser-406 by ATM; this promotes recruitment of BRCA1 to sites of DNA damage.

It is found in the nucleus. In terms of biological role, involved in DNA damage response and double-strand break (DSB) repair. Component of the BRCA1-A complex, acting as a central scaffold protein that assembles the various components of the complex and mediates the recruitment of BRCA1. The BRCA1-A complex specifically recognizes 'Lys-63'-linked ubiquitinated histones H2A and H2AX at DNA lesion sites, leading to target the BRCA1-BARD1 heterodimer to sites of DNA damage at DSBs. This complex also possesses deubiquitinase activity that specifically removes 'Lys-63'-linked ubiquitin on histones H2A and H2AX. The sequence is that of BRCA1-A complex subunit Abraxas 1 from Homo sapiens (Human).